The primary structure comprises 176 residues: Centromere protein R (176 aa).

Residue Lys-8 forms a Glycyl lysine isopeptide (Lys-Gly) (interchain with G-Cter in SUMO2) linkage. Ser-17 carries the phosphoserine modification. The segment at 20–50 (PSKIVRKKSITAYSPTTGTYQLSPFSSPATP) is DD1. Lys-22 is covalently cross-linked (Glycyl lysine isopeptide (Lys-Gly) (interchain with G-Cter in SUMO2)). The residue at position 28 (Ser-28) is a Phosphoserine. Positions 34 to 48 (PTTGTYQLSPFSSPA) are enriched in polar residues. The disordered stretch occupies residues 34-78 (PTTGTYQLSPFSSPATPKEQEHRNGPSNETRKRSNLSSPVRQEST). A compositionally biased stretch (basic and acidic residues) spans 51–65 (KEQEHRNGPSNETRK). Residues 63–66 (TRKR) carry the Nuclear localization signal motif. Ser-71 is subject to Phosphoserine. Positions 82–112 (RDGFMVLLSKIEISSEKTMEIMKNLSSIQAL) form a coiled coil. The LXXIL motif motif lies at 171–175 (LKAIL).

In terms of assembly, homodimer; mediated by the coiled coil domain. Interacts with CCNA2 and MTA1. Interacts with NFKB1 NF-kappa-B subunit. Component of the CENPA-CAD complex, composed of CENPI, CENPK, CENPL, CENPO, CENPP, CENPQ, CENPR and CENPS. The CENPA-CAD complex interacts with the CENPA-NAC complex, at least composed of CENPA, CENPC, CENPH, CENPM, CENPN, CENPT and CENPU. Interacts with TASOR. Expressed in the spermatogonia and spermatocytes.

The protein localises to the nucleus. It localises to the chromosome. It is found in the centromere. Its subcellular location is the kinetochore. Its function is as follows. Transcription coregulator that can have both coactivator and corepressor functions. Involved in the coactivation of nuclear receptors for retinoid X (RXRs) and thyroid hormone (TRs) in a ligand-dependent fashion. In contrast, it does not coactivate nuclear receptors for retinoic acid, vitamin D, progesterone receptor, nor glucocorticoid. Acts as a coactivator for estrogen receptor alpha. Acts as a transcriptional corepressor via its interaction with the NFKB1 NF-kappa-B subunit, possibly by interfering with the transactivation domain of NFKB1. Induces apoptosis in breast cancer cells, but not in other cancer cells, via a caspase-2 mediated pathway that involves mitochondrial membrane permeabilization but does not require other caspases. May also act as an inhibitor of cyclin A-associated kinase. Also acts a component of the CENPA-CAD (nucleosome distal) complex, a complex recruited to centromeres which is involved in assembly of kinetochore proteins, mitotic progression and chromosome segregation. May be involved in incorporation of newly synthesized CENPA into centromeres via its interaction with the CENPA-NAC complex. The protein is Centromere protein R (Itgb3bp) of Mus musculus (Mouse).